The chain runs to 98 residues: NADH-ubiquinone oxidoreductase chain 4L (98 aa).

The next 3 membrane-spanning stretches (helical) occupy residues 1–21 (MSLT…GLLM), 29–49 (SLLC…MTIL), and 61–81 (IILL…LVMV).

The protein belongs to the complex I subunit 4L family. In terms of assembly, core subunit of respiratory chain NADH dehydrogenase (Complex I) which is composed of 45 different subunits.

The protein resides in the mitochondrion inner membrane. It catalyses the reaction a ubiquinone + NADH + 5 H(+)(in) = a ubiquinol + NAD(+) + 4 H(+)(out). Core subunit of the mitochondrial membrane respiratory chain NADH dehydrogenase (Complex I) which catalyzes electron transfer from NADH through the respiratory chain, using ubiquinone as an electron acceptor. Part of the enzyme membrane arm which is embedded in the lipid bilayer and involved in proton translocation. The chain is NADH-ubiquinone oxidoreductase chain 4L (MT-ND4L) from Stenoderma rufum (Red fruit bat).